The sequence spans 181 residues: Large ribosomal subunit protein uL6 (181 aa).

The protein belongs to the universal ribosomal protein uL6 family. As to quaternary structure, part of the 50S ribosomal subunit.

This protein binds to the 23S rRNA, and is important in its secondary structure. It is located near the subunit interface in the base of the L7/L12 stalk, and near the tRNA binding site of the peptidyltransferase center. The protein is Large ribosomal subunit protein uL6 of Hydrogenobaculum sp. (strain Y04AAS1).